A 429-amino-acid polypeptide reads, in one-letter code: Glutamyl-tRNA reductase (429 aa).

Residues 50–53 (TCNR), S116, 121–123 (EPQ), and Q127 contribute to the substrate site. The active-site Nucleophile is C51. An NADP(+)-binding site is contributed by 196–201 (GAGEMA).

Belongs to the glutamyl-tRNA reductase family. Homodimer.

The catalysed reaction is (S)-4-amino-5-oxopentanoate + tRNA(Glu) + NADP(+) = L-glutamyl-tRNA(Glu) + NADPH + H(+). Its pathway is porphyrin-containing compound metabolism; protoporphyrin-IX biosynthesis; 5-aminolevulinate from L-glutamyl-tRNA(Glu): step 1/2. Catalyzes the NADPH-dependent reduction of glutamyl-tRNA(Glu) to glutamate 1-semialdehyde (GSA). This Thermodesulfovibrio yellowstonii (strain ATCC 51303 / DSM 11347 / YP87) protein is Glutamyl-tRNA reductase.